A 124-amino-acid chain; its full sequence is Large ribosomal subunit protein eL31 (124 aa).

This sequence belongs to the eukaryotic ribosomal protein eL31 family. Component of the large ribosomal subunit.

The protein localises to the cytoplasm. Functionally, component of the large ribosomal subunit. The ribosome is a large ribonucleoprotein complex responsible for the synthesis of proteins in the cell. The polypeptide is Large ribosomal subunit protein eL31 (rpl31) (Paralichthys olivaceus (Bastard halibut)).